A 477-amino-acid polypeptide reads, in one-letter code: Alanine--glyoxylate aminotransferase 2 homolog 2, mitochondrial (477 aa).

The N-terminal 22 residues, 1–22 (MQRFAAKRSVQNISVSLWRRCI), are a transit peptide targeting the mitochondrion. Residues 165 to 166 (GT), Y192, and 292 to 295 (DEVQ) each bind pyridoxal 5'-phosphate. K321 carries the post-translational modification N6-(pyridoxal phosphate)lysine. Position 350 (T350) interacts with pyridoxal 5'-phosphate.

The protein belongs to the class-III pyridoxal-phosphate-dependent aminotransferase family. As to quaternary structure, homotetramer. Interacts with GRF3. Pyridoxal 5'-phosphate is required as a cofactor.

It is found in the mitochondrion. The catalysed reaction is glyoxylate + L-alanine = glycine + pyruvate. This chain is Alanine--glyoxylate aminotransferase 2 homolog 2, mitochondrial (AGT3), found in Arabidopsis thaliana (Mouse-ear cress).